A 196-amino-acid chain; its full sequence is Translation initiation factor IF-3 (196 aa).

The protein belongs to the IF-3 family. As to quaternary structure, monomer.

It localises to the cytoplasm. In terms of biological role, IF-3 binds to the 30S ribosomal subunit and shifts the equilibrium between 70S ribosomes and their 50S and 30S subunits in favor of the free subunits, thus enhancing the availability of 30S subunits on which protein synthesis initiation begins. The protein is Translation initiation factor IF-3 of Wigglesworthia glossinidia brevipalpis.